The following is a 66-amino-acid chain: Large ribosomal subunit protein uL29 (66 aa).

This sequence belongs to the universal ribosomal protein uL29 family.

This chain is Large ribosomal subunit protein uL29, found in Borrelia recurrentis (strain A1).